The sequence spans 108 residues: uncharacterized protein (108 aa).

This is an uncharacterized protein from Acanthamoeba polyphaga (Amoeba).